The primary structure comprises 209 residues: NAD(P)H-quinone oxidoreductase subunit N, chloroplastic (209 aa).

The N-terminal 45 residues, methionine 1–lysine 45, are a transit peptide targeting the chloroplast.

This sequence belongs to the NDH complex subunit N family. Part of the chloroplast NDH complex, composed of a mixture of chloroplast and nucleus encoded subunits. Component of the NDH subcomplex A, at least composed of ndhH, ndhI, ndhJ, ndhK, ndhL, ndhM, ndhN and ndhO.

Its subcellular location is the plastid. It is found in the chloroplast thylakoid membrane. It carries out the reaction a plastoquinone + NADH + (n+1) H(+)(in) = a plastoquinol + NAD(+) + n H(+)(out). The catalysed reaction is a plastoquinone + NADPH + (n+1) H(+)(in) = a plastoquinol + NADP(+) + n H(+)(out). NDH shuttles electrons from NAD(P)H:plastoquinone, via FMN and iron-sulfur (Fe-S) centers, to quinones in the photosynthetic chain and possibly in a chloroplast respiratory chain. The immediate electron acceptor for the enzyme in this species is believed to be plastoquinone. Couples the redox reaction to proton translocation, and thus conserves the redox energy in a proton gradient. The polypeptide is NAD(P)H-quinone oxidoreductase subunit N, chloroplastic (Arabidopsis thaliana (Mouse-ear cress)).